The following is a 218-amino-acid chain: Protein-L-isoaspartate O-methyltransferase (218 aa).

The active site involves Ser63.

The protein belongs to the methyltransferase superfamily. L-isoaspartyl/D-aspartyl protein methyltransferase family.

The protein localises to the cytoplasm. The enzyme catalyses [protein]-L-isoaspartate + S-adenosyl-L-methionine = [protein]-L-isoaspartate alpha-methyl ester + S-adenosyl-L-homocysteine. Its function is as follows. Catalyzes the methyl esterification of L-isoaspartyl residues in peptides and proteins that result from spontaneous decomposition of normal L-aspartyl and L-asparaginyl residues. It plays a role in the repair and/or degradation of damaged proteins. This Syntrophus aciditrophicus (strain SB) protein is Protein-L-isoaspartate O-methyltransferase.